The primary structure comprises 290 residues: Putative beta-lactamase HcpC (290 aa).

Positions 1 to 25 (MLENVKKSFFRVLCLGALCLGGLMA) are cleaved as a signal peptide. 7 TPR repeats span residues 29–62 (PKEL…KENS), 64–98 (CFNL…NYSN), 100–133 (CHLL…LKYA), 134–170 (EGCA…NDGD), 172–205 (CTIL…LKDS), 206–242 (PGCF…ENGG), and 244–278 (CFNL…GAKG). 7 cysteine pairs are disulfide-bonded: C56-C64, C92-C100, C128-C136, C164-C172, C200-C208, C236-C244, and C272-C280.

It belongs to the hcp beta-lactamase family.

It localises to the secreted. The catalysed reaction is a beta-lactam + H2O = a substituted beta-amino acid. Functionally, may hydrolyze 6-aminopenicillinic acid and 7-aminocephalosporanic acid (ACA) derivatives. The polypeptide is Putative beta-lactamase HcpC (hcpC) (Helicobacter pylori (strain ATCC 700392 / 26695) (Campylobacter pylori)).